The primary structure comprises 241 residues: Class B acid phosphatase (241 aa).

Positions Met1–Ala27 are cleaved as a signal peptide. Asp72 functions as the Nucleophile in the catalytic mechanism. Residues Asp72 and Asp74 each coordinate Mg(2+). Asp74 (proton donor) is an active-site residue. Substrate-binding positions include Thr141–Gly142 and Lys181. Asp196 contributes to the Mg(2+) binding site.

The protein belongs to the class B bacterial acid phosphatase family. As to quaternary structure, homotetramer. Mg(2+) is required as a cofactor.

Its subcellular location is the periplasm. It carries out the reaction a phosphate monoester + H2O = an alcohol + phosphate. Functionally, dephosphorylates several organic phosphate monoesters. Also has a phosphotransferase activity catalyzing the transfer of low-energy phosphate groups from organic phosphate monoesters to free hydroxyl groups of various organic compounds. This chain is Class B acid phosphatase, found in Edwardsiella ictaluri (strain 93-146).